The primary structure comprises 125 residues: Unclassified hydrophobin 8 (125 aa).

Residues 1 to 20 form the signal peptide; sequence MMFSKPVVLATTALATFAAA. 4 disulfides stabilise this stretch: cysteine 31–cysteine 105, cysteine 38–cysteine 99, cysteine 39–cysteine 90, and cysteine 106–cysteine 119.

The protein belongs to the fungal hydrophobin family. In terms of assembly, self-assembles to form functional amyloid fibrils called rodlets. Self-assembly into fibrillar rodlets occurs spontaneously at hydrophobic:hydrophilic interfaces and the rodlets further associate laterally to form amphipathic monolayers.

It localises to the secreted. It is found in the cell wall. Its function is as follows. Aerial growth, conidiation, and dispersal of filamentous fungi in the environment rely upon a capability of their secreting small amphipathic proteins called hydrophobins (HPBs) with low sequence identity. Class I can self-assemble into an outermost layer of rodlet bundles on aerial cell surfaces, conferring cellular hydrophobicity that supports fungal growth, development and dispersal; whereas Class II form highly ordered films at water-air interfaces through intermolecular interactions but contribute nothing to the rodlet structure. Hydph8 is an unclassified hydrophobin involved in mycelial growth. This Pleurotus ostreatus (strain PC15) (Oyster mushroom) protein is Unclassified hydrophobin 8.